The following is a 164-amino-acid chain: MTPVRLGVLAGIVALVLDQVTKLWLLYGFELARKGVVQVLPFFDLVLAWNTGISYGWFSGQGPTGQILMLAFKAVAIVALAIWMARSTTKLATIGLGLIIGGAIGNAIDRLAYGAVVDFALLHAEIGGKIYNWYVFNIADVAIVVGVAALLYDSLIGLPAAKAP.

Transmembrane regions (helical) follow at residues 6 to 26 (LGVL…LWLL), 39 to 59 (VLPF…GWFS), 65 to 85 (GQIL…IWMA), and 88 to 108 (TTKL…GNAI). Active-site residues include Asp118 and Asp140. Residues 141–161 (VAIVVGVAALLYDSLIGLPAA) traverse the membrane as a helical segment.

Belongs to the peptidase A8 family.

Its subcellular location is the cell inner membrane. The enzyme catalyses Release of signal peptides from bacterial membrane prolipoproteins. Hydrolyzes -Xaa-Yaa-Zaa-|-(S,diacylglyceryl)Cys-, in which Xaa is hydrophobic (preferably Leu), and Yaa (Ala or Ser) and Zaa (Gly or Ala) have small, neutral side chains.. It functions in the pathway protein modification; lipoprotein biosynthesis (signal peptide cleavage). Functionally, this protein specifically catalyzes the removal of signal peptides from prolipoproteins. This chain is Lipoprotein signal peptidase, found in Rhodopseudomonas palustris (strain ATCC BAA-98 / CGA009).